The chain runs to 413 residues: Serine hydroxymethyltransferase (413 aa).

Residues Leu-120 and 124–126 (GHL) contribute to the (6S)-5,6,7,8-tetrahydrofolate site. N6-(pyridoxal phosphate)lysine is present on Lys-228.

This sequence belongs to the SHMT family. Homodimer. Pyridoxal 5'-phosphate serves as cofactor.

The protein localises to the cytoplasm. It catalyses the reaction (6R)-5,10-methylene-5,6,7,8-tetrahydrofolate + glycine + H2O = (6S)-5,6,7,8-tetrahydrofolate + L-serine. It functions in the pathway one-carbon metabolism; tetrahydrofolate interconversion. Its pathway is amino-acid biosynthesis; glycine biosynthesis; glycine from L-serine: step 1/1. In terms of biological role, catalyzes the reversible interconversion of serine and glycine with tetrahydrofolate (THF) serving as the one-carbon carrier. This reaction serves as the major source of one-carbon groups required for the biosynthesis of purines, thymidylate, methionine, and other important biomolecules. Also exhibits THF-independent aldolase activity toward beta-hydroxyamino acids, producing glycine and aldehydes, via a retro-aldol mechanism. This is Serine hydroxymethyltransferase from Agathobacter rectalis (strain ATCC 33656 / DSM 3377 / JCM 17463 / KCTC 5835 / VPI 0990) (Eubacterium rectale).